The following is a 163-amino-acid chain: Probable chemoreceptor glutamine deamidase CheD (163 aa).

Belongs to the CheD family.

It catalyses the reaction L-glutaminyl-[protein] + H2O = L-glutamyl-[protein] + NH4(+). Its function is as follows. Probably deamidates glutamine residues to glutamate on methyl-accepting chemotaxis receptors (MCPs), playing an important role in chemotaxis. This chain is Probable chemoreceptor glutamine deamidase CheD, found in Pyrococcus abyssi (strain GE5 / Orsay).